The sequence spans 345 residues: tRNA N6-adenosine threonylcarbamoyltransferase (345 aa).

Positions 115 and 119 each coordinate Fe cation. Substrate contacts are provided by residues 137–141 (LVSGG), Asp-170, Gly-183, Asp-187, and Asn-276. Fe cation is bound at residue Asp-306.

Belongs to the KAE1 / TsaD family. Fe(2+) is required as a cofactor.

It is found in the cytoplasm. The catalysed reaction is L-threonylcarbamoyladenylate + adenosine(37) in tRNA = N(6)-L-threonylcarbamoyladenosine(37) in tRNA + AMP + H(+). Its function is as follows. Required for the formation of a threonylcarbamoyl group on adenosine at position 37 (t(6)A37) in tRNAs that read codons beginning with adenine. Is involved in the transfer of the threonylcarbamoyl moiety of threonylcarbamoyl-AMP (TC-AMP) to the N6 group of A37, together with TsaE and TsaB. TsaD likely plays a direct catalytic role in this reaction. The chain is tRNA N6-adenosine threonylcarbamoyltransferase from Pediococcus pentosaceus (strain ATCC 25745 / CCUG 21536 / LMG 10740 / 183-1w).